Here is a 213-residue protein sequence, read N- to C-terminus: 3,4-dihydroxy-2-butanone 4-phosphate synthase (213 aa).

Residues 37-38, aspartate 42, 150-154, and glutamate 174 contribute to the D-ribulose 5-phosphate site; these read RE and RSGHT. Glutamate 38 serves as a coordination point for Mg(2+). Histidine 153 is a binding site for Mg(2+).

The protein belongs to the DHBP synthase family. Homodimer. It depends on Mg(2+) as a cofactor. Mn(2+) serves as cofactor.

It catalyses the reaction D-ribulose 5-phosphate = (2S)-2-hydroxy-3-oxobutyl phosphate + formate + H(+). It functions in the pathway cofactor biosynthesis; riboflavin biosynthesis; 2-hydroxy-3-oxobutyl phosphate from D-ribulose 5-phosphate: step 1/1. In terms of biological role, catalyzes the conversion of D-ribulose 5-phosphate to formate and 3,4-dihydroxy-2-butanone 4-phosphate. This Blochmanniella floridana protein is 3,4-dihydroxy-2-butanone 4-phosphate synthase.